A 429-amino-acid chain; its full sequence is Adenylosuccinate synthetase (429 aa).

Residues 12–18 (GDEGKGK) and 40–42 (GHT) each bind GTP. The Proton acceptor role is filled by Asp-13. Mg(2+) contacts are provided by Asp-13 and Gly-40. Residues 13–16 (DEGK), 38–41 (NAGH), Thr-128, Arg-142, Gln-223, Thr-238, and Arg-302 contribute to the IMP site. His-41 acts as the Proton donor in catalysis. Residue 298-304 (TTTGRAR) participates in substrate binding. Residues Arg-304, 330–332 (SID), and 412–414 (SVG) each bind GTP.

It belongs to the adenylosuccinate synthetase family. As to quaternary structure, homodimer. Mg(2+) is required as a cofactor.

It is found in the cytoplasm. It catalyses the reaction IMP + L-aspartate + GTP = N(6)-(1,2-dicarboxyethyl)-AMP + GDP + phosphate + 2 H(+). It functions in the pathway purine metabolism; AMP biosynthesis via de novo pathway; AMP from IMP: step 1/2. Plays an important role in the de novo pathway of purine nucleotide biosynthesis. Catalyzes the first committed step in the biosynthesis of AMP from IMP. The protein is Adenylosuccinate synthetase of Oceanobacillus iheyensis (strain DSM 14371 / CIP 107618 / JCM 11309 / KCTC 3954 / HTE831).